The chain runs to 781 residues: Molybdenum cofactor sulfurase (781 aa).

K246 is subject to N6-(pyridoxal phosphate)lysine. Residue C413 is part of the active site. The MOSC domain occupies 635–781 (LRLLRQSGQR…MTCGDVVLVE (147 aa)). At S734 the chain carries Phosphoserine.

This sequence belongs to the class-V pyridoxal-phosphate-dependent aminotransferase family. MOCOS subfamily. It depends on pyridoxal 5'-phosphate as a cofactor.

It catalyses the reaction Mo-molybdopterin + L-cysteine + AH2 = thio-Mo-molybdopterin + L-alanine + A + H2O. Its pathway is cofactor biosynthesis; molybdopterin biosynthesis. Its function is as follows. Sulfurates the molybdenum cofactor. Sulfation of molybdenum is essential for xanthine dehydrogenase (XDH) and aldehyde oxidase (ADO) enzymes in which molybdenum cofactor is liganded by 1 oxygen and 1 sulfur atom in active form. The sequence is that of Molybdenum cofactor sulfurase from Drosophila melanogaster (Fruit fly).